The following is a 405-amino-acid chain: L-rhamnonate dehydratase (405 aa).

His33 and Arg59 together coordinate substrate. Positions 226, 252, and 280 each coordinate Mg(2+). His329 acts as the Proton acceptor in catalysis. Residue Glu349 coordinates substrate.

It belongs to the mandelate racemase/muconate lactonizing enzyme family. RhamD subfamily. As to quaternary structure, homooctamer; tetramer of dimers. It depends on Mg(2+) as a cofactor.

The enzyme catalyses L-rhamnonate = 2-dehydro-3-deoxy-L-rhamnonate + H2O. Functionally, catalyzes the dehydration of L-rhamnonate to 2-keto-3-deoxy-L-rhamnonate (KDR). This is L-rhamnonate dehydratase from Escherichia coli O127:H6 (strain E2348/69 / EPEC).